The primary structure comprises 327 residues: DNA-directed RNA polymerase subunit alpha (327 aa).

Residues 1-233 (MVREKVKVST…NLFIPFLHVE (233 aa)) are alpha N-terminal domain (alpha-NTD). The interval 265–327 (KELAFQYIFI…KKILDILEKK (63 aa)) is alpha C-terminal domain (alpha-CTD).

The protein belongs to the RNA polymerase alpha chain family. As to quaternary structure, in plastids the minimal PEP RNA polymerase catalytic core is composed of four subunits: alpha, beta, beta', and beta''. When a (nuclear-encoded) sigma factor is associated with the core the holoenzyme is formed, which can initiate transcription.

The protein resides in the plastid. It is found in the chloroplast. It catalyses the reaction RNA(n) + a ribonucleoside 5'-triphosphate = RNA(n+1) + diphosphate. Its function is as follows. DNA-dependent RNA polymerase catalyzes the transcription of DNA into RNA using the four ribonucleoside triphosphates as substrates. The protein is DNA-directed RNA polymerase subunit alpha of Olimarabidopsis pumila (Dwarf rocket).